A 4466-amino-acid polypeptide reads, in one-letter code: Dynein beta chain, ciliary (4466 aa).

Positions 1-1813 are stem; it reads MADVVDPRLE…YANICDAQFK (1813 aa). An ATP-binding site is contributed by 154–161; the sequence is AGQVKGKT. Coiled coils occupy residues 733–805, 1036–1056, 1306–1337, and 1443–1468; these read TVLE…WTKQ, TLDQ…EADE, WLEI…AWDA, and LLKS…MTSK. 4 AAA regions span residues 1814–2035, 2095–2316, 2422–2669, and 2767–3016; these read YSYE…VLVV, KVVK…VRFK, ELDP…VFQG, and TYNE…ERRY. Residues 1852-1859, 2133-2140, 2460-2467, and 2805-2812 each bind ATP; these read GPAGTGKT, GNAGTGKS, GNAGLGKS, and GVGGSGKQ. 3 coiled-coil regions span residues 3033–3092, 3263–3325, and 3573–3642; these read SLLS…QVVG, EPKR…SRTI, and QERP…EEAK. Residues 3033-3325 are stalk; that stretch reads SLLSMKSKEL…QEAEATSRTI (293 aa). AAA regions lie at residues 3409–3636 and 3846–4072; these read LTDD…EISV and VRNF…VLYN.

It belongs to the dynein heavy chain family. Consists of at least two heavy chains (alpha and beta), three intermediate chains and several light chains.

The protein localises to the cell projection. Its subcellular location is the cilium. It is found in the flagellum. The protein resides in the cytoplasm. It localises to the cytoskeleton. The protein localises to the flagellum axoneme. In terms of biological role, force generating protein of eukaryotic cilia and flagella. Produces force towards the minus ends of microtubules. Dynein has ATPase activity; the force-producing power stroke is thought to occur on release of ADP. The polypeptide is Dynein beta chain, ciliary (Tripneustes gratilla (Hawaian sea urchin)).